A 341-amino-acid polypeptide reads, in one-letter code: tRNA N6-adenosine threonylcarbamoyltransferase (341 aa).

2 residues coordinate Fe cation: histidine 111 and histidine 115. Residues 134–138, aspartate 167, glycine 180, and asparagine 276 contribute to the substrate site; that span reads LVSGG. A Fe cation-binding site is contributed by aspartate 304.

This sequence belongs to the KAE1 / TsaD family. Fe(2+) is required as a cofactor.

Its subcellular location is the cytoplasm. It carries out the reaction L-threonylcarbamoyladenylate + adenosine(37) in tRNA = N(6)-L-threonylcarbamoyladenosine(37) in tRNA + AMP + H(+). In terms of biological role, required for the formation of a threonylcarbamoyl group on adenosine at position 37 (t(6)A37) in tRNAs that read codons beginning with adenine. Is involved in the transfer of the threonylcarbamoyl moiety of threonylcarbamoyl-AMP (TC-AMP) to the N6 group of A37, together with TsaE and TsaB. TsaD likely plays a direct catalytic role in this reaction. The protein is tRNA N6-adenosine threonylcarbamoyltransferase of Pseudomonas syringae pv. tomato (strain ATCC BAA-871 / DC3000).